The sequence spans 192 residues: Putative cyclic ADP-D-ribose synthase ThsB1 (192 aa).

This sequence belongs to the Thoeris B TIR-like family. As to quaternary structure, monomer; not seen to interact with ThsA.

It localises to the cytoplasm. With respect to regulation, activated upon phage infection. TIR-like domain-containing component of the Thoeris antiviral defense system, composed of ThsA and ThsB. Expression of ThsA and ThsB in B.subtilis (strain BEST7003) confers resistance to phages SBSphiC, SBSphiJ and SPO1. Phage infection activates this protein so that 30 to 45 minutes post-infection with phage SPO1 it generates a signal molecule that in turn activates the NAD(+) hydrolase activity of ThsA. The signal is similar to cyclic ADP-D-ribose, but how it differs is unknown. In vitro purified (but unactivated) ThsB has no NAD(+) hydrolyzing activity, no activity on AMP, CMP, GMP or UMP, does not alter the activity of ThsA, does not bind DNA. Hydrolyzes NAD(+) to make a cyclic ADP-D-ribose (cADPR) signaling molecule; might make 3'cADPR. In Bacillus cereus (strain MSX-D12), this protein is Putative cyclic ADP-D-ribose synthase ThsB1.